A 72-amino-acid polypeptide reads, in one-letter code: Translation initiation factor IF-1 (72 aa).

Residues 1–72 (MSKEEVLEFS…TKGRIIYRYK (72 aa)) form the S1-like domain.

The protein belongs to the IF-1 family. As to quaternary structure, component of the 30S ribosomal translation pre-initiation complex which assembles on the 30S ribosome in the order IF-2 and IF-3, IF-1 and N-formylmethionyl-tRNA(fMet); mRNA recruitment can occur at any time during PIC assembly.

The protein localises to the cytoplasm. Functionally, one of the essential components for the initiation of protein synthesis. Stabilizes the binding of IF-2 and IF-3 on the 30S subunit to which N-formylmethionyl-tRNA(fMet) subsequently binds. Helps modulate mRNA selection, yielding the 30S pre-initiation complex (PIC). Upon addition of the 50S ribosomal subunit IF-1, IF-2 and IF-3 are released leaving the mature 70S translation initiation complex. This is Translation initiation factor IF-1 from Bartonella henselae (strain ATCC 49882 / DSM 28221 / CCUG 30454 / Houston 1) (Rochalimaea henselae).